The primary structure comprises 123 residues: Small ribosomal subunit protein eS8 (123 aa).

The segment at 1 to 37 is disordered; it reads MKDQGRSTRKRTGGRLKHASNKKRHQLGREPAETTVG. Positions 7 to 26 are enriched in basic residues; the sequence is STRKRTGGRLKHASNKKRHQ.

The protein belongs to the eukaryotic ribosomal protein eS8 family. In terms of assembly, part of the 30S ribosomal subunit.

The chain is Small ribosomal subunit protein eS8 from Halorubrum lacusprofundi (strain ATCC 49239 / DSM 5036 / JCM 8891 / ACAM 34).